Here is a 591-residue protein sequence, read N- to C-terminus: Laccase (591 aa).

The N-terminal stretch at Met-1 to Ala-20 is a signal peptide. Plastocyanin-like domains lie at Val-66–Asp-189 and Ile-198–Asn-356. N-linked (GlcNAc...) asparagine glycosylation is present at Asn-121. Residues His-126, His-128, His-171, and His-173 each coordinate Cu cation. Cystine bridges form between Cys-147/Cys-571 and Cys-332/Cys-366. Residues Asn-234, Asn-242, Asn-265, and Asn-323 are each glycosylated (N-linked (GlcNAc...) asparagine). Asn-407 and Asn-425 each carry an N-linked (GlcNAc...) asparagine glycan. The 136-residue stretch at Gly-416–Gln-551 folds into the Plastocyanin-like 3 domain. Cu cation contacts are provided by His-463, His-466, His-468, His-533, Cys-534, His-535, and His-539.

Belongs to the multicopper oxidase family. Requires Cu cation as cofactor.

It localises to the secreted. It catalyses the reaction 4 hydroquinone + O2 = 4 benzosemiquinone + 2 H2O. Lignin degradation and detoxification of lignin-derived products. In Cryphonectria parasitica (Chestnut blight fungus), this protein is Laccase (LAC-1).